The chain runs to 208 residues: Small ribosomal subunit protein uS4 (208 aa).

In terms of domain architecture, S4 RNA-binding spans 98 to 158 (RRLDNIAYRL…EKSRKVACIN (61 aa)).

This sequence belongs to the universal ribosomal protein uS4 family. As to quaternary structure, part of the 30S ribosomal subunit. Contacts protein S5. The interaction surface between S4 and S5 is involved in control of translational fidelity.

Functionally, one of the primary rRNA binding proteins, it binds directly to 16S rRNA where it nucleates assembly of the body of the 30S subunit. Its function is as follows. With S5 and S12 plays an important role in translational accuracy. The protein is Small ribosomal subunit protein uS4 of Geotalea uraniireducens (strain Rf4) (Geobacter uraniireducens).